The primary structure comprises 185 residues: Potassium-transporting ATPase KdpC subunit (185 aa).

The chain crosses the membrane as a helical span at residues 14 to 34; that stretch reads ALSLLTGVAYPLALTGIAAVI. The disordered stretch occupies residues 105 to 128; that stretch reads AQNGAPAPVDAVTASGSGLDPHVS.

It belongs to the KdpC family. As to quaternary structure, the system is composed of three essential subunits: KdpA, KdpB and KdpC.

It localises to the cell inner membrane. Functionally, part of the high-affinity ATP-driven potassium transport (or Kdp) system, which catalyzes the hydrolysis of ATP coupled with the electrogenic transport of potassium into the cytoplasm. This subunit acts as a catalytic chaperone that increases the ATP-binding affinity of the ATP-hydrolyzing subunit KdpB by the formation of a transient KdpB/KdpC/ATP ternary complex. The sequence is that of Potassium-transporting ATPase KdpC subunit from Cereibacter sphaeroides (strain ATCC 17029 / ATH 2.4.9) (Rhodobacter sphaeroides).